Consider the following 352-residue polypeptide: Heat-inducible transcription repressor HrcA (352 aa).

It belongs to the HrcA family.

In terms of biological role, negative regulator of class I heat shock genes (grpE-dnaK-dnaJ and groELS operons). Prevents heat-shock induction of these operons. The protein is Heat-inducible transcription repressor HrcA of Ralstonia nicotianae (strain ATCC BAA-1114 / GMI1000) (Ralstonia solanacearum).